A 691-amino-acid polypeptide reads, in one-letter code: Kinetochore protein NDC80 (691 aa).

Residues 1 to 95 (MQSSTSTDQH…LNDKSNSRNS (95 aa)) form a disordered region. The segment covering 10–19 (HVLHHMDPHR) has biased composition (basic and acidic residues). Residues 20-42 (FTSQIPTATSSQLRRRNSTNQGL) show a composition bias toward polar residues. Position 38 is a phosphothreonine (Thr-38). The segment covering 54-65 (TISGTGIPTGGI) has biased composition (low complexity). Position 248 is a phosphothreonine (Thr-248). 2 coiled-coil regions span residues 376–446 (GKLE…SIKS) and 522–686 (KKSI…FETE).

The protein belongs to the NDC80/HEC1 family. In terms of assembly, component of the NDC80 complex, which consists of NDC80, NUF2, SPC24 and SPC25. The NDC80 complex is formed by two subcomplexes, NDC80-NUF2 and SPC24-SPC25, which are joined end-to-end through their coiled-coil domains. It has a rod-like structure with a length of 570 Angstroms and globular domains at either end. The NDC80-NUF2 globular domains are probably directed to microtubules, the SPC24-SPC25 globular domains to the centromere. NDC80 probably interacts with SMC1 and SMC2. Also interacts with KIN3. Interacts with DMC1.

The protein resides in the nucleus. The protein localises to the chromosome. It localises to the centromere. Its subcellular location is the kinetochore. Acts as a component of the essential kinetochore-associated NDC80 complex, which is involved in chromosome segregation and spindle checkpoint activity. The protein is Kinetochore protein NDC80 of Saccharomyces cerevisiae (strain ATCC 204508 / S288c) (Baker's yeast).